We begin with the raw amino-acid sequence, 1568 residues long: Pentafunctional AROM polypeptide (1568 aa).

The tract at residues 1 to 380 (MSQVEKVSIL…YQLKAHEVSK (380 aa)) is 3-dehydroquinate synthase. Residues 43–45 (DSN), 81–84 (ENNK), 112–114 (GGV), and Asp117 each bind NAD(+). Arg128 provides a ligand contact to 7-phospho-2-dehydro-3-deoxy-D-arabino-heptonate. Residue 137-138 (TT) coordinates NAD(+). Residues Asp144 and Lys150 each coordinate 7-phospho-2-dehydro-3-deoxy-D-arabino-heptonate. NAD(+) is bound at residue Lys159. Asn160 lines the 7-phospho-2-dehydro-3-deoxy-D-arabino-heptonate pocket. NAD(+) contacts are provided by residues 177–180 (FLTT) and Asn188. A Zn(2+)-binding site is contributed by Glu192. 7-phospho-2-dehydro-3-deoxy-D-arabino-heptonate is bound by residues 192-195 (EVVK) and Lys244. Glu254 functions as the Proton acceptor; for 3-dehydroquinate synthase activity in the catalytic mechanism. 7-phospho-2-dehydro-3-deoxy-D-arabino-heptonate contacts are provided by residues 258–262 (RNLLN) and His265. His265 is a Zn(2+) binding site. His269 functions as the Proton acceptor; for 3-dehydroquinate synthase activity in the catalytic mechanism. Residues His281 and Lys352 each contribute to the 7-phospho-2-dehydro-3-deoxy-D-arabino-heptonate site. His281 is a Zn(2+) binding site. The segment at 393–842 (VHPFQEETTP…WDVLHTKFGV (450 aa)) is EPSP synthase. Residue Cys824 is the For EPSP synthase activity of the active site. A shikimate kinase region spans residues 867 to 1056 (DKSIVVIGMR…VPKGRSFVLS (190 aa)). An ATP-binding site is contributed by 874–881 (GMRAAGKS). The 3-dehydroquinase stretch occupies residues 1057-1267 (LACSDLNDIA…SGNGQLTVGE (211 aa)). The segment at 1280–1568 (RRNFYIVGNP…VYEAVVDDNV (289 aa)) is shikimate dehydrogenase.

This sequence in the N-terminal section; belongs to the sugar phosphate cyclases superfamily. Dehydroquinate synthase family. The protein in the 2nd section; belongs to the EPSP synthase family. It in the 3rd section; belongs to the shikimate kinase family. In the 4th section; belongs to the type-I 3-dehydroquinase family. This sequence in the C-terminal section; belongs to the shikimate dehydrogenase family. In terms of assembly, homodimer. Zn(2+) serves as cofactor.

The protein resides in the cytoplasm. The catalysed reaction is 7-phospho-2-dehydro-3-deoxy-D-arabino-heptonate = 3-dehydroquinate + phosphate. It carries out the reaction 3-dehydroquinate = 3-dehydroshikimate + H2O. The enzyme catalyses shikimate + NADP(+) = 3-dehydroshikimate + NADPH + H(+). It catalyses the reaction shikimate + ATP = 3-phosphoshikimate + ADP + H(+). The catalysed reaction is 3-phosphoshikimate + phosphoenolpyruvate = 5-O-(1-carboxyvinyl)-3-phosphoshikimate + phosphate. Its pathway is metabolic intermediate biosynthesis; chorismate biosynthesis; chorismate from D-erythrose 4-phosphate and phosphoenolpyruvate: step 2/7. The protein operates within metabolic intermediate biosynthesis; chorismate biosynthesis; chorismate from D-erythrose 4-phosphate and phosphoenolpyruvate: step 3/7. It participates in metabolic intermediate biosynthesis; chorismate biosynthesis; chorismate from D-erythrose 4-phosphate and phosphoenolpyruvate: step 4/7. It functions in the pathway metabolic intermediate biosynthesis; chorismate biosynthesis; chorismate from D-erythrose 4-phosphate and phosphoenolpyruvate: step 5/7. Its pathway is metabolic intermediate biosynthesis; chorismate biosynthesis; chorismate from D-erythrose 4-phosphate and phosphoenolpyruvate: step 6/7. Functionally, the AROM polypeptide catalyzes 5 consecutive enzymatic reactions in prechorismate polyaromatic amino acid biosynthesis. The protein is Pentafunctional AROM polypeptide of Clavispora lusitaniae (strain ATCC 42720) (Yeast).